The sequence spans 340 residues: Phenylalanine--tRNA ligase alpha subunit (340 aa).

Glu255 is a binding site for Mg(2+).

The protein belongs to the class-II aminoacyl-tRNA synthetase family. Phe-tRNA synthetase alpha subunit type 1 subfamily. Tetramer of two alpha and two beta subunits. Requires Mg(2+) as cofactor.

Its subcellular location is the cytoplasm. The enzyme catalyses tRNA(Phe) + L-phenylalanine + ATP = L-phenylalanyl-tRNA(Phe) + AMP + diphosphate + H(+). The polypeptide is Phenylalanine--tRNA ligase alpha subunit (Exiguobacterium sp. (strain ATCC BAA-1283 / AT1b)).